We begin with the raw amino-acid sequence, 482 residues long: Proline--tRNA ligase (482 aa).

The protein belongs to the class-II aminoacyl-tRNA synthetase family. ProS type 3 subfamily. As to quaternary structure, homodimer.

The protein localises to the cytoplasm. It catalyses the reaction tRNA(Pro) + L-proline + ATP = L-prolyl-tRNA(Pro) + AMP + diphosphate. Functionally, catalyzes the attachment of proline to tRNA(Pro) in a two-step reaction: proline is first activated by ATP to form Pro-AMP and then transferred to the acceptor end of tRNA(Pro). In Mycoplasmopsis synoviae (strain 53) (Mycoplasma synoviae), this protein is Proline--tRNA ligase.